The following is a 395-amino-acid chain: Tryptophan synthase beta chain (395 aa).

Lys86 is modified (N6-(pyridoxal phosphate)lysine).

This sequence belongs to the TrpB family. As to quaternary structure, tetramer of two alpha and two beta chains. Pyridoxal 5'-phosphate serves as cofactor.

It carries out the reaction (1S,2R)-1-C-(indol-3-yl)glycerol 3-phosphate + L-serine = D-glyceraldehyde 3-phosphate + L-tryptophan + H2O. It participates in amino-acid biosynthesis; L-tryptophan biosynthesis; L-tryptophan from chorismate: step 5/5. Its function is as follows. The beta subunit is responsible for the synthesis of L-tryptophan from indole and L-serine. In Pseudoalteromonas atlantica (strain T6c / ATCC BAA-1087), this protein is Tryptophan synthase beta chain.